A 79-amino-acid chain; its full sequence is MFVKTGDKVKVIAGKDKGKEGTVLSVNAKTNRIVVKGVNKIKKHEKPSQANANGGVVEKEGSIHASNVKVIAKKEDNNK.

The protein belongs to the universal ribosomal protein uL24 family. Part of the 50S ribosomal subunit.

In terms of biological role, one of two assembly initiator proteins, it binds directly to the 5'-end of the 23S rRNA, where it nucleates assembly of the 50S subunit. Functionally, one of the proteins that surrounds the polypeptide exit tunnel on the outside of the subunit. The sequence is that of Large ribosomal subunit protein uL24 from Lactobacillus gasseri (strain ATCC 33323 / DSM 20243 / BCRC 14619 / CIP 102991 / JCM 1131 / KCTC 3163 / NCIMB 11718 / NCTC 13722 / AM63).